A 377-amino-acid chain; its full sequence is Cell division protein FtsZ (377 aa).

A compositionally biased stretch (acidic residues) spans 1–16; it reads MDSIVDDAIDEAEDMG. The segment at 1–33 is disordered; that stretch reads MDSIVDDAIDEAEDMGDGSAEVGGPTDINRSGT. Residues 57-61, 144-146, Glu-175, Arg-179, and Asp-222 each bind GTP; these read GAGGN and GTG.

This sequence belongs to the FtsZ family. In terms of assembly, homodimer. Polymerizes to form a dynamic ring structure in a strictly GTP-dependent manner. Interacts directly with several other division proteins.

It localises to the cytoplasm. Functionally, essential cell division protein that forms a contractile ring structure (Z ring) at the future cell division site. The regulation of the ring assembly controls the timing and the location of cell division. One of the functions of the FtsZ ring is to recruit other cell division proteins to the septum to produce a new cell wall between the dividing cells. Binds GTP and shows GTPase activity. The chain is Cell division protein FtsZ from Haloferax mediterranei (strain ATCC 33500 / DSM 1411 / JCM 8866 / NBRC 14739 / NCIMB 2177 / R-4) (Halobacterium mediterranei).